The sequence spans 1043 residues: NACHT, LRR and PYD domains-containing protein 13 (1043 aa).

The Pyrin domain maps to 1-107 (MNFSVITCPN…CEKVRAEMKE (107 aa)). The NACHT domain maps to 229–558 (QTIVLVGRAG…VLEEPREFPP (330 aa)). 235–242 (GRAGVGKT) is a binding site for ATP. LRR repeat units follow at residues 725-749 (NENLHELDLSNSKLHASSVKGLCLA), 781-804 (NSKLTHLNFSSNKLGMTVPLILKA), 837-864 (IQHVTRLCLGFNRLQDDGIKLLCAALTH), 894-917 (NRSLTHLNLSKNSLRDEGVKFLCE), 923-946 (DGNLQSLNLSGCSFTREGCGELAN), 951-978 (NHNVKILDLGENDLQDDGVKLLCEALKP), and 1007-1030 (SKSLVNLNLLGNELDTDGVKMLCK).

It belongs to the NLRP family.

Its function is as follows. Involved in inflammation. The polypeptide is NACHT, LRR and PYD domains-containing protein 13 (NLRP13) (Homo sapiens (Human)).